The following is a 119-amino-acid chain: Dihydroneopterin aldolase (119 aa).

Substrate is bound by residues E21, Y53, and I72 to E73. K99 serves as the catalytic Proton donor/acceptor.

The protein belongs to the DHNA family.

It carries out the reaction 7,8-dihydroneopterin = 6-hydroxymethyl-7,8-dihydropterin + glycolaldehyde. It functions in the pathway cofactor biosynthesis; tetrahydrofolate biosynthesis; 2-amino-4-hydroxy-6-hydroxymethyl-7,8-dihydropteridine diphosphate from 7,8-dihydroneopterin triphosphate: step 3/4. In terms of biological role, catalyzes the conversion of 7,8-dihydroneopterin to 6-hydroxymethyl-7,8-dihydropterin. This is Dihydroneopterin aldolase (folB) from Streptococcus pyogenes serotype M6 (strain ATCC BAA-946 / MGAS10394).